The primary structure comprises 320 residues: Myeloid-associated differentiation marker (320 aa).

2 consecutive MARVEL domains span residues 25–157 (ALTQ…ARPG) and 162–317 (YMAT…RLVF). 8 helical membrane-spanning segments follow: residues 35–55 (LLQLISTCVAFSLVASVGAWT), 61–81 (WAMFTWCFCFAVTLIILIVEL), 95–115 (FPITFACYAALFCLSSSIIYP), 131–151 (AIAATTFSCVACLAYATEVAW), 165–185 (TVPGLLKVFETFVACIIFAFI), 197–217 (LEWCVAVYAICFILAGVTILL), 233–253 (FLSGLALLSVLFYATAIVLWP), and 292–312 (LAVSILTGINLLAYVSDLVYS).

The protein belongs to the MAL family.

Its subcellular location is the membrane. The sequence is that of Myeloid-associated differentiation marker (Myadm) from Mus musculus (Mouse).